The chain runs to 332 residues: Glycerol-3-phosphate dehydrogenase [NAD(P)+] (332 aa).

Residues Trp11, Arg30, and Lys108 each coordinate NADPH. 3 residues coordinate sn-glycerol 3-phosphate: Lys108, Gly137, and Ser139. An NADPH-binding site is contributed by Ala141. Positions 192, 245, 255, 256, and 257 each coordinate sn-glycerol 3-phosphate. Lys192 functions as the Proton acceptor in the catalytic mechanism. Arg256 lines the NADPH pocket. NADPH contacts are provided by Val280 and Glu282.

Belongs to the NAD-dependent glycerol-3-phosphate dehydrogenase family.

Its subcellular location is the cytoplasm. It catalyses the reaction sn-glycerol 3-phosphate + NAD(+) = dihydroxyacetone phosphate + NADH + H(+). It carries out the reaction sn-glycerol 3-phosphate + NADP(+) = dihydroxyacetone phosphate + NADPH + H(+). The protein operates within membrane lipid metabolism; glycerophospholipid metabolism. Its function is as follows. Catalyzes the reduction of the glycolytic intermediate dihydroxyacetone phosphate (DHAP) to sn-glycerol 3-phosphate (G3P), the key precursor for phospholipid synthesis. This Burkholderia vietnamiensis (strain G4 / LMG 22486) (Burkholderia cepacia (strain R1808)) protein is Glycerol-3-phosphate dehydrogenase [NAD(P)+].